The chain runs to 180 residues: Chromosome-anchoring protein RacA (180 aa).

Positions 5-25 (TPFIAKKLGVSPKAVVRIAQQ) form a DNA-binding region, H-T-H motif. A coiled-coil region spans residues 89-151 (SHDFEQLTAQ…LEATLKKEEP (63 aa)).

Belongs to the RacA family.

The protein resides in the cytoplasm. Its function is as follows. Required for the formation of axial filaments and for anchoring the origin regions at the cell poles in sporulating cells, thus ensuring proper chromosome segregation in the prespore. Binds in a dispersed manner throughout the chromosome but preferentially to sites clustered in the origin portion of the chromosome, causing condensation of the chromosome and its remodeling into an elongated, anchored structure. The chain is Chromosome-anchoring protein RacA from Bacillus cereus (strain ATCC 10987 / NRS 248).